The sequence spans 419 residues: L-rhamnose isomerase (419 aa).

The Mn(2+) site is built by H262, D294, and D296.

Belongs to the rhamnose isomerase family. As to quaternary structure, homotetramer. It depends on Mn(2+) as a cofactor.

Its subcellular location is the cytoplasm. The enzyme catalyses L-rhamnopyranose = L-rhamnulose. The protein operates within carbohydrate degradation; L-rhamnose degradation; glycerone phosphate from L-rhamnose: step 1/3. Catalyzes the interconversion of L-rhamnose and L-rhamnulose. The polypeptide is L-rhamnose isomerase (Escherichia coli (strain 55989 / EAEC)).